Reading from the N-terminus, the 89-residue chain is Large ribosomal subunit protein bL27 (89 aa).

A disordered region spans residues 1–20 (MAHKKAGGSSRNGRDSESKR).

It belongs to the bacterial ribosomal protein bL27 family.

This is Large ribosomal subunit protein bL27 from Bartonella bacilliformis (strain ATCC 35685 / KC583 / Herrer 020/F12,63).